The chain runs to 141 residues: Acetyltransferase YpeA (141 aa).

An N-acetyltransferase domain is found at 1-141; it reads MEIRVFRQED…GKRLIEDEEY (141 aa).

The protein belongs to the acetyltransferase family. YpeA subfamily.

The protein is Acetyltransferase YpeA (ypeA) of Escherichia coli (strain K12).